The chain runs to 221 residues: Ras-related protein Rab-28 (221 aa).

Ser2 bears the N-acetylserine mark. Residue Ser8 is modified to Phosphoserine. The GTP site is built by Gly21, Gly24, Lys25, Thr26, Ser27, Gly38, Lys39, Tyr41, and Thr44. Position 26 (Thr26) interacts with Mg(2+). Residues 35–49 (ETFGKQYKQTIGLDF) are switch I. 2 residues coordinate Mg(2+): Thr44 and Asp68. The interval 68–85 (DIGGQTIGGKMLDKYIYG) is switch II. Residues Gly71, Asn129, Lys130, Asp132, Ala160, and Lys161 each coordinate GTP. Cys218 carries the cysteine methyl ester modification. Cys218 is lipidated: S-farnesyl cysteine. Positions 219 to 221 (AVQ) are cleaved as a propeptide — removed in mature form.

The protein belongs to the small GTPase superfamily. Rab family. In terms of assembly, interacts (prenylated form) with PDE6D; the interaction promotes RAB28 delivery to the photoreceptor outer segments. Interacts with KCNJ13; the interaction may facilitate cone outer segments phagocytosis. Interacts with RELA; the interaction contributes to RELA transport from cytoplasm to nucleus. Requires Mg(2+) as cofactor. Post-translationally, isoprenylated.

Its subcellular location is the cell membrane. It is found in the cytoplasm. It localises to the cytoskeleton. The protein resides in the cilium basal body. The protein localises to the nucleus. The enzyme catalyses GTP + H2O = GDP + phosphate + H(+). With respect to regulation, regulated by guanine nucleotide exchange factors (GEFs) which promote the exchange of bound GDP for free GTP. Regulated by GTPase activating proteins (GAPs) which increase the GTP hydrolysis activity. Inhibited by GDP dissociation inhibitors (GDIs). Functionally, the small GTPases Rab are key regulators of intracellular membrane trafficking, from the formation of transport vesicles to their fusion with membranes. Rabs cycle between an inactive GDP-bound form and an active GTP-bound form that is able to recruit to membranes different sets of downstream effectors directly responsible for vesicle formation, movement, tethering and fusion. RAB28 is required for shedding and phagocytosis of cone cell outer segments (OS) discs in the retina. Also participates in nuclear factor kappa-B p65/RELA nuclear transport in endothelial cells. This chain is Ras-related protein Rab-28 (RAB28), found in Bos taurus (Bovine).